The sequence spans 1070 residues: Probable arabinosyltransferase C (1070 aa).

12 helical membrane passes run 10-32, 210-232, 247-269, 399-421, 425-442, 449-471, 512-534, 547-564, 574-596, 603-625, 645-664, and 685-707; these read IARLLAVIAGLLGALLAMATPFL, LLKTIAMILGVVLTIVALVALHL, SRWWSIGCLDGLVITILAWWHFV, VATSRLLPVAVACIVGALTLFSG, IASIGALLVAVGPLLTIL, FGAVPLVAPILAASTVTAILIFR, SVARRFAVLALLVALSVAVAMSL, SRRIIGITVTSFLAMMFT, VFAGLAGSLGALAAVAVASAALR, VFAAVVLFVVALSFASVNGWWYV, TALLELTVIVLLLAAWFHFV, and SPIAIATWSLVIFEVASLTMAMI.

Belongs to the emb family.

It localises to the cell membrane. Arabinosyl transferase responsible for the polymerization of arabinose into the arabinan of arabinogalactan. This is Probable arabinosyltransferase C (embC) from Mycobacterium leprae (strain TN).